The following is a 383-amino-acid chain: Transposase InsI for insertion sequence element IS30C (383 aa).

Residues V213–V379 form the Integrase catalytic domain.

The protein belongs to the transposase IS30 family.

Its function is as follows. Required for the transposition of the insertion element. The protein is Transposase InsI for insertion sequence element IS30C (insI3) of Escherichia coli (strain K12).